We begin with the raw amino-acid sequence, 533 residues long: Lysophosphatidylcholine acyltransferase (533 aa).

At 1 to 79 (MTTSTIKPTG…VLTVLLLPIR (79 aa)) the chain is on the cytoplasmic side. A helical; Signal-anchor for type II membrane protein transmembrane segment spans residues 80–100 (VVGCVLSLISAWMFACIGLYG). Over 101–533 (MTLDDLKAKP…PKAVVTTAEN (433 aa)) the chain is Lumenal. The short motif at 158–163 (HSSYVD) is the HXXXXD motif element. 3 EF-hand domains span residues 402–437 (LKNTDLHKLFALLDHRRSGTVSLKSFLLCSLFCKLK), 439–474 (SDLLTFLRALIHLYSESSQQIDRESFVRLMRHAGGK), and 475–510 (LNEQKAQALFYALDTDNLGYVSFDSFVELTEKQKSS).

It belongs to the 1-acyl-sn-glycerol-3-phosphate acyltransferase family.

The protein resides in the endoplasmic reticulum membrane. It localises to the golgi apparatus membrane. The protein localises to the lipid droplet. It carries out the reaction a 1-acyl-sn-glycero-3-phosphocholine + an acyl-CoA = a 1,2-diacyl-sn-glycero-3-phosphocholine + CoA. It participates in lipid metabolism; phospholipid metabolism. Its function is as follows. Acetyltransferase which mediates the conversion of 1-acyl-sn-glycero-3-phosphocholine (LPC) into phosphatidylcholine (PC). Has a calcium-independent activity. Displays a clear preference for saturated fatty acyl-CoAs, and 1-myristoyl or 1-palmitoyl LPC as acyl donors and acceptors, respectively. Involved in the regulation of lipid droplet number and size. This chain is Lysophosphatidylcholine acyltransferase, found in Drosophila melanogaster (Fruit fly).